Reading from the N-terminus, the 134-residue chain is Cytochrome b (134 aa).

The next 3 helical transmembrane spans lie at 33–53, 77–98, and 113–133; these read FGSL…FLAM, WLIR…FLHV, and WNMG…GYVL. Heme b-binding residues include histidine 83 and histidine 97.

Belongs to the cytochrome b family. As to quaternary structure, the cytochrome bc1 complex contains 11 subunits: 3 respiratory subunits (MT-CYB, CYC1 and UQCRFS1), 2 core proteins (UQCRC1 and UQCRC2) and 6 low-molecular weight proteins (UQCRH/QCR6, UQCRB/QCR7, UQCRQ/QCR8, UQCR10/QCR9, UQCR11/QCR10 and a cleavage product of UQCRFS1). This cytochrome bc1 complex then forms a dimer. Heme b is required as a cofactor.

Its subcellular location is the mitochondrion inner membrane. Component of the ubiquinol-cytochrome c reductase complex (complex III or cytochrome b-c1 complex) that is part of the mitochondrial respiratory chain. The b-c1 complex mediates electron transfer from ubiquinol to cytochrome c. Contributes to the generation of a proton gradient across the mitochondrial membrane that is then used for ATP synthesis. The protein is Cytochrome b (MT-CYB) of Microtus subterraneus (European pine vole).